The primary structure comprises 574 residues: Tyrosinase (574 aa).

Residues His-67, His-95, His-104, His-275, His-279, and His-304 each coordinate Cu cation. Residues 93–95 (CTH) constitute a cross-link (2'-(S-cysteinyl)-histidine (Cys-His)).

This sequence belongs to the tyrosinase family. Cu(2+) serves as cofactor.

It catalyses the reaction 2 L-dopa + O2 = 2 L-dopaquinone + 2 H2O. It carries out the reaction L-tyrosine + O2 = L-dopaquinone + H2O. Functionally, this is a copper-containing oxidase that functions in the formation of pigments such as melanins and other polyphenolic compounds. The polypeptide is Tyrosinase (TYR) (Podospora anserina (Pleurage anserina)).